The following is a 342-amino-acid chain: Phosphate acyltransferase (342 aa).

This sequence belongs to the PlsX family. Homodimer. Probably interacts with PlsY.

The protein localises to the cytoplasm. It catalyses the reaction a fatty acyl-[ACP] + phosphate = an acyl phosphate + holo-[ACP]. The protein operates within lipid metabolism; phospholipid metabolism. Its function is as follows. Catalyzes the reversible formation of acyl-phosphate (acyl-PO(4)) from acyl-[acyl-carrier-protein] (acyl-ACP). This enzyme utilizes acyl-ACP as fatty acyl donor, but not acyl-CoA. The polypeptide is Phosphate acyltransferase (Trichormus variabilis (strain ATCC 29413 / PCC 7937) (Anabaena variabilis)).